The sequence spans 374 residues: Putative glutamate--cysteine ligase 2-1 (374 aa).

Belongs to the glutamate--cysteine ligase type 2 family. YbdK subfamily.

It carries out the reaction L-cysteine + L-glutamate + ATP = gamma-L-glutamyl-L-cysteine + ADP + phosphate + H(+). Functionally, ATP-dependent carboxylate-amine ligase which exhibits weak glutamate--cysteine ligase activity. The chain is Putative glutamate--cysteine ligase 2-1 from Saccharopolyspora erythraea (strain ATCC 11635 / DSM 40517 / JCM 4748 / NBRC 13426 / NCIMB 8594 / NRRL 2338).